A 371-amino-acid polypeptide reads, in one-letter code: Putative 26S proteasome regulatory subunit homolog MJ1494 (371 aa).

ATP is bound at residue 161 to 168 (GPPGTGKT).

This sequence belongs to the AAA ATPase family.

In terms of biological role, the 26S proteasome is involved in the ATP-dependent degradation of ubiquitinated proteins. The regulatory (or ATPase) complex confers ATP dependency and substrate specificity to the 26S complex. This is Putative 26S proteasome regulatory subunit homolog MJ1494 from Methanocaldococcus jannaschii (strain ATCC 43067 / DSM 2661 / JAL-1 / JCM 10045 / NBRC 100440) (Methanococcus jannaschii).